An 841-amino-acid chain; its full sequence is Protein translocase subunit SecA (841 aa).

ATP contacts are provided by residues Q86, 104–108, and D493; that span reads GEGKT. The tract at residues 788 to 822 is disordered; the sequence is EEVAEGKAVRPSANGQEDKKAKRKPVRKAENIGRN. C825, C827, C836, and C837 together coordinate Zn(2+).

Belongs to the SecA family. Monomer and homodimer. Part of the essential Sec protein translocation apparatus which comprises SecA, SecYEG and auxiliary proteins SecDF. Other proteins may also be involved. Requires Zn(2+) as cofactor.

Its subcellular location is the cell membrane. It localises to the cytoplasm. The catalysed reaction is ATP + H2O + cellular proteinSide 1 = ADP + phosphate + cellular proteinSide 2.. Part of the Sec protein translocase complex. Interacts with the SecYEG preprotein conducting channel. Has a central role in coupling the hydrolysis of ATP to the transfer of proteins into and across the cell membrane, serving as an ATP-driven molecular motor driving the stepwise translocation of polypeptide chains across the membrane. In Shouchella clausii (strain KSM-K16) (Alkalihalobacillus clausii), this protein is Protein translocase subunit SecA.